The chain runs to 247 residues: Caffeoyl-CoA O-methyltransferase 1 (247 aa).

Lys-21 serves as a coordination point for substrate. Residues Thr-63, Glu-85, 87–88 (GV), Ser-93, Asp-111, and Ala-140 each bind S-adenosyl-L-methionine. Residue Asp-163 participates in substrate binding. Asp-163 contacts a divalent metal cation. Asp-165 provides a ligand contact to S-adenosyl-L-methionine. Residues Asp-189 and Asn-190 each contribute to the a divalent metal cation site. Asn-194 provides a ligand contact to substrate.

Belongs to the class I-like SAM-binding methyltransferase superfamily. Cation-dependent O-methyltransferase family. CCoAMT subfamily. A divalent metal cation is required as a cofactor.

The catalysed reaction is (E)-caffeoyl-CoA + S-adenosyl-L-methionine = (E)-feruloyl-CoA + S-adenosyl-L-homocysteine + H(+). It participates in aromatic compound metabolism; phenylpropanoid biosynthesis. Methylates caffeoyl-CoA to feruloyl-CoA and 5-hydroxyferuloyl-CoA to sinapoyl-CoA. Plays a role in the synthesis of feruloylated polysaccharides. Involved in the reinforcement of the plant cell wall. Also involved in the responding to wounding or pathogen challenge by the increased formation of cell wall-bound ferulic acid polymers. The chain is Caffeoyl-CoA O-methyltransferase 1 (CCOAOMT1) from Populus trichocarpa (Western balsam poplar).